The sequence spans 431 residues: Adenylosuccinate synthetase (431 aa).

Residues 12–18 (GDEGKGK) and 40–42 (GHT) contribute to the GTP site. The Proton acceptor role is filled by aspartate 13. Residues aspartate 13 and glycine 40 each contribute to the Mg(2+) site. IMP-binding positions include 13 to 16 (DEGK), 38 to 41 (NAGH), threonine 130, arginine 144, glutamine 225, threonine 240, and arginine 304. The active-site Proton donor is histidine 41. 300–306 (ATTGRPR) is a substrate binding site. GTP-binding positions include arginine 306, 332-334 (KLD), and 414-416 (SVG).

Belongs to the adenylosuccinate synthetase family. Homodimer. The cofactor is Mg(2+).

Its subcellular location is the cytoplasm. The catalysed reaction is IMP + L-aspartate + GTP = N(6)-(1,2-dicarboxyethyl)-AMP + GDP + phosphate + 2 H(+). The protein operates within purine metabolism; AMP biosynthesis via de novo pathway; AMP from IMP: step 1/2. Its function is as follows. Plays an important role in the de novo pathway of purine nucleotide biosynthesis. Catalyzes the first committed step in the biosynthesis of AMP from IMP. The sequence is that of Adenylosuccinate synthetase from Geotalea uraniireducens (strain Rf4) (Geobacter uraniireducens).